The following is a 283-amino-acid chain: Bifunctional protein FolD (283 aa).

NADP(+) contacts are provided by residues 166–168 (GAS) and Ile232.

This sequence belongs to the tetrahydrofolate dehydrogenase/cyclohydrolase family. As to quaternary structure, homodimer.

The enzyme catalyses (6R)-5,10-methylene-5,6,7,8-tetrahydrofolate + NADP(+) = (6R)-5,10-methenyltetrahydrofolate + NADPH. It catalyses the reaction (6R)-5,10-methenyltetrahydrofolate + H2O = (6R)-10-formyltetrahydrofolate + H(+). It participates in one-carbon metabolism; tetrahydrofolate interconversion. Its function is as follows. Catalyzes the oxidation of 5,10-methylenetetrahydrofolate to 5,10-methenyltetrahydrofolate and then the hydrolysis of 5,10-methenyltetrahydrofolate to 10-formyltetrahydrofolate. The sequence is that of Bifunctional protein FolD from Wigglesworthia glossinidia brevipalpis.